A 322-amino-acid polypeptide reads, in one-letter code: uncharacterized protein (322 aa).

The stretch at 205–286 (QEIKNAHAAL…LKKAISEAVQ (82 aa)) forms a coiled coil. Basic and acidic residues-rich tracts occupy residues 254-281 (EKEEELNKKDKEKEEETEKEGEKLKKAI) and 290-299 (DRIEAIEKSR). A disordered region spans residues 254 to 322 (EKEEELNKKD…VQKSIWSGLF (69 aa)). Polar residues predominate over residues 310–322 (SEQVQKSIWSGLF).

This sequence to B.subtilis XkdF.

This is an uncharacterized protein from Bacillus subtilis (strain 168).